Here is a 568-residue protein sequence, read N- to C-terminus: 2-succinyl-5-enolpyruvyl-6-hydroxy-3-cyclohexene-1-carboxylate synthase (568 aa).

It belongs to the TPP enzyme family. MenD subfamily. Homodimer. It depends on Mg(2+) as a cofactor. Requires Mn(2+) as cofactor. Thiamine diphosphate is required as a cofactor.

The catalysed reaction is isochorismate + 2-oxoglutarate + H(+) = 5-enolpyruvoyl-6-hydroxy-2-succinyl-cyclohex-3-ene-1-carboxylate + CO2. It functions in the pathway quinol/quinone metabolism; 1,4-dihydroxy-2-naphthoate biosynthesis; 1,4-dihydroxy-2-naphthoate from chorismate: step 2/7. It participates in quinol/quinone metabolism; menaquinone biosynthesis. Its function is as follows. Catalyzes the thiamine diphosphate-dependent decarboxylation of 2-oxoglutarate and the subsequent addition of the resulting succinic semialdehyde-thiamine pyrophosphate anion to isochorismate to yield 2-succinyl-5-enolpyruvyl-6-hydroxy-3-cyclohexene-1-carboxylate (SEPHCHC). The sequence is that of 2-succinyl-5-enolpyruvyl-6-hydroxy-3-cyclohexene-1-carboxylate synthase from Actinobacillus succinogenes (strain ATCC 55618 / DSM 22257 / CCUG 43843 / 130Z).